The sequence spans 346 residues: NADH-ubiquinone oxidoreductase chain 2 (346 aa).

Helical transmembrane passes span 1 to 21 (MNPHATPVLVLSLALGTTITI), 25 to 45 (HWVLAWTGLEINTLAIIPLIS), 60 to 80 (FLTQAAASALVLFSSMTNAWA), 95 to 115 (CLLLTAAIAIKLGLVPFHFWF), 124 to 144 (LMTALLLSTLMKFPPLTLLLM), 149 to 169 (LNPALLTTMALASAALGGWMG), 178 to 195 (ILAFSSISHLGWIAIILV), 200 to 219 (LALLTFYLYTIMTSAVFMAL), 242 to 262 (ATLMLVLLSLAGLPPLTGFMP), 274 to 294 (EMTPAAMAIAMLSLLSLFFYL), and 326 to 346 (AILASLSILLLPLSPMIHAIV).

This sequence belongs to the complex I subunit 2 family.

It localises to the mitochondrion inner membrane. It carries out the reaction a ubiquinone + NADH + 5 H(+)(in) = a ubiquinol + NAD(+) + 4 H(+)(out). Core subunit of the mitochondrial membrane respiratory chain NADH dehydrogenase (Complex I) that is believed to belong to the minimal assembly required for catalysis. Complex I functions in the transfer of electrons from NADH to the respiratory chain. The immediate electron acceptor for the enzyme is believed to be ubiquinone. This Sibirionetta formosa (Baikal teal) protein is NADH-ubiquinone oxidoreductase chain 2 (MT-ND2).